We begin with the raw amino-acid sequence, 323 residues long: Protoheme IX farnesyltransferase (323 aa).

8 helical membrane-spanning segments follow: residues 28 to 48 (IIPL…EGRV), 50 to 70 (LFTL…AQVM), 101 to 121 (FIFA…FVNL), 122 to 142 (LSGL…THLL), 150 to 170 (IVIG…AVTG), 178 to 198 (ILFA…ALMI), 235 to 255 (FLLV…AIIL), and 282 to 302 (FSIF…LPLT).

Belongs to the UbiA prenyltransferase family. Protoheme IX farnesyltransferase subfamily.

It localises to the cell inner membrane. The enzyme catalyses heme b + (2E,6E)-farnesyl diphosphate + H2O = Fe(II)-heme o + diphosphate. It functions in the pathway porphyrin-containing compound metabolism; heme O biosynthesis; heme O from protoheme: step 1/1. Functionally, converts heme B (protoheme IX) to heme O by substitution of the vinyl group on carbon 2 of heme B porphyrin ring with a hydroxyethyl farnesyl side group. This Rippkaea orientalis (strain PCC 8801 / RF-1) (Cyanothece sp. (strain PCC 8801)) protein is Protoheme IX farnesyltransferase.